We begin with the raw amino-acid sequence, 360 residues long: Molybdenum import ATP-binding protein ModC (360 aa).

The 230-residue stretch at 5–234 (VKLHLGYQDF…LDLPLALGDD (230 aa)) folds into the ABC transporter domain. 32-39 (GHSGSGKT) lines the ATP pocket. In terms of domain architecture, Mop spans 295 to 360 (HSSILNRLPV…AQIKAVAVLA (66 aa)).

It belongs to the ABC transporter superfamily. Molybdate importer (TC 3.A.1.8) family. In terms of assembly, the complex is composed of two ATP-binding proteins (ModC), two transmembrane proteins (ModB) and a solute-binding protein (ModA).

It localises to the cell inner membrane. The enzyme catalyses molybdate(out) + ATP + H2O = molybdate(in) + ADP + phosphate + H(+). Functionally, part of the ABC transporter complex ModABC involved in molybdenum import. Responsible for energy coupling to the transport system. This is Molybdenum import ATP-binding protein ModC from Pseudomonas fluorescens (strain ATCC BAA-477 / NRRL B-23932 / Pf-5).